A 138-amino-acid chain; its full sequence is Acidic phospholipase A2 Cvv-E6h (138 aa).

An N-terminal signal peptide occupies residues 1 to 16; that stretch reads MRTLWIVAVLLLGVEG. Cystine bridges form between C42-C131, C44-C60, C59-C111, C65-C138, C66-C104, C73-C97, and C91-C102. Ca(2+)-binding residues include Y43, G45, and G47. H63 is an active-site residue. D64 contributes to the Ca(2+) binding site. D105 is a catalytic residue.

It belongs to the phospholipase A2 family. Group II subfamily. D49 sub-subfamily. The cofactor is Ca(2+). As to expression, expressed by the venom gland.

It is found in the secreted. It catalyses the reaction a 1,2-diacyl-sn-glycero-3-phosphocholine + H2O = a 1-acyl-sn-glycero-3-phosphocholine + a fatty acid + H(+). In terms of biological role, snake venom phospholipase A2 (PLA2) that shows very low inhibition of ADP-induced platelet aggregation in platelet-rich plasma of human, rabbit and guinea pig. In vivo, shows efficient edema-inducing activities in rat paws. PLA2 catalyzes the calcium-dependent hydrolysis of the 2-acyl groups in 3-sn-phosphoglycerides. This chain is Acidic phospholipase A2 Cvv-E6h, found in Crotalus viridis viridis (Prairie rattlesnake).